We begin with the raw amino-acid sequence, 518 residues long: FAD-dependent monooxygenase tpcD (518 aa).

The N-terminal stretch at 1–22 (MQLLGTLSWLYAIQASIGSSKA) is a signal peptide. A glycan (N-linked (GlcNAc...) asparagine) is linked at asparagine 61. The FAD-binding PCMH-type domain occupies 75-246 (QSAQPACLVH…TRFDLDVFQQ (172 aa)). The residue at position 112 (histidine 112) is a Pros-8alpha-FAD histidine. Asparagine 163, asparagine 208, asparagine 216, and asparagine 346 each carry an N-linked (GlcNAc...) asparagine glycan.

The protein belongs to the oxygen-dependent FAD-linked oxidoreductase family. FAD serves as cofactor.

The protein operates within secondary metabolite biosynthesis; terpenoid biosynthesis. Functionally, FAD-dependent monooxygenase; part of the gene cluster that mediates the biosynthesis of terpestacin. The bifunctional terpene synthase tpcA converts isopentenyl diphosphate (IPP) and dimethylallyl diphosphate (DMAPP) into the sesterterpene preterpestacin I. The C-terminal prenyltransferase (PT) domain of tpcA catalyzes formation of GFPP, whereas the N-terminal terpene cyclase (TC) domain catalyzes the cyclization of GFPP into preterpestacin I. The cytochrome P450 monooxygenase tpcB then hydroxylates preterpestacin I to yield 24-hydroxypreterpstacin I (renamed as preterpestacin II) whereas the cytochrome P450 monooxygenase tpcC further hydroxylates preterpestacin II to yield 16,17-dihydroxypreterpestacin II (renamed as preterpestacin III). Finally, the FAD-dependent monooxygenase tpcD converts preterpestacin III into terpestacin. The sequence is that of FAD-dependent monooxygenase tpcD from Cochliobolus heterostrophus (strain C5 / ATCC 48332 / race O) (Southern corn leaf blight fungus).